A 481-amino-acid polypeptide reads, in one-letter code: MNEVAIVKEGWLHKRGEYIKTWRPRYFLLKSDGTFIGYKERPQDVDQLETPLNNFSVAKCQLMKTERPKPNTFIIRCLQWTTVIERTFHVDSPEEREEWIQVIQHVADNLKKQEEEMMEVRSGDSPSDNSGAEEMEVSHSKPKHKVTMNEFEYLKLLGKGTFGKVILVKEKATGRYYAMKILKKEVIVAKDEVAHTLTENRVLQNSRHPFLTALKYSFQTHDRLCFVMEYANGGELFFHLSRERIFSEDRARFYGAEIVSALDYLHSEKNVVYRDLKLENLMLDKDGHIKITDFGLCKEGIKDGATMKTFCGTPEYLAPEVLEDNDYGRAVDWWGLGVVMYEMMCGRLPFYNQDHEKLFELILMEEIRFPRTLLPEAKSLLSGLLKKDPKQRLGGGPDDAKEIMQHKFFAGIVWQDVYEKKLVPPFKPQVTSETDTRYFDEEFTAQMITITPPDQDDNFEFVDNERRPHFPQFSYSASGNA.

A PH domain is found at alanine 5–aspartate 108. Residues valine 120–lysine 141 are disordered. Serine 127 and serine 130 each carry an O-linked (GlcNAc) serine glycan. Positions phenylalanine 151–phenylalanine 409 constitute a Protein kinase domain. ATP-binding positions include leucine 157 to valine 165 and lysine 180. Aspartate 275 (proton acceptor) is an active-site residue. An O-linked (GlcNAc) threonine glycan is attached at threonine 306. A Phosphothreonine; by PDPK1 modification is found at threonine 309. Threonine 313 is a glycosylation site (O-linked (GlcNAc) threonine). The AGC-kinase C-terminal domain maps to alanine 410–alanine 481. Residue serine 474 is modified to Phosphoserine. Serine 474 is a glycosylation site (O-linked (GlcNAc) serine; alternate). At tyrosine 475 the chain carries Phosphotyrosine.

This sequence belongs to the protein kinase superfamily. AGC Ser/Thr protein kinase family. RAC subfamily. Post-translationally, cleavage by caspase-3/CASP3. Cleaved at the caspase-3 consensus site Asp-463 during apoptosis, resulting in down-regulation of the AKT signaling pathway and decreased cell survival. Phosphorylation on Thr-309 and Ser-474 is required for full activity. Phosphorylation of the activation loop at Thr-309 by PDPK1/PDK1 is a prerequisite for full activation. Phosphorylation by mTORC2 at Ser-474 in response to growth factors plays a key role in AKT1 activation by facilitating subsequent phosphorylation of the activation loop by PDPK1/PDK1. As to expression, expressed in the oocyte.

The protein resides in the cytoplasm. It is found in the nucleus. It carries out the reaction L-seryl-[protein] + ATP = O-phospho-L-seryl-[protein] + ADP + H(+). The enzyme catalyses L-threonyl-[protein] + ATP = O-phospho-L-threonyl-[protein] + ADP + H(+). Its activity is regulated as follows. Activated in response to insulin. Three specific sites, one in the kinase domain (Thr-309) and the two other ones in the C-terminal regulatory region (Ser-474 and Tyr-475), need to be phosphorylated for its full activation. Its function is as follows. AKT1 is one of several closely related serine/threonine-protein kinases known as the AKT kinase, and which regulate many processes including metabolism, proliferation, cell survival, growth and angiogenesis. This is mediated through serine and/or threonine phosphorylation of a range of downstream substrates. Over 100 substrate candidates have been reported so far, but for most of them, no isoform specificity has been reported. Signals downstream of phosphatidylinositol 3-kinase (PI(3)K) to mediate the effects of various growth factors such as platelet-derived growth factor (PDGF), epidermal growth factor (EGF), insulin and insulin-like growth factor 1 (IGF1). Plays a role as a key modulator of the AKT-mTOR signaling pathway controlling the tempo of the process of newborn neurons integration during adult neurogenesis, including correct neuron positioning, dendritic development and synapse formation. Plays a role in glucose transport by mediating insulin-induced translocation of the GLUT4 glucose transporter to the cell surface. Mediates the antiapoptotic effects of IGF1. Mediates insulin-stimulated protein synthesis, partly by playing a role in both insulin-induced phosphorylation of 4E-BP1 and in insulin-induced activation of p70 S6 kinase. Promotes glycogen synthesis by mediating the insulin-induced activation of glycogen synthase. Required for insulin-stimulated meiotic reinitiation during oocyte maturation. May be involved in the regulation of vesicular functions such as preciliary trafficking and endocytic recycling. This chain is RAC-alpha serine/threonine-protein kinase, found in Xenopus laevis (African clawed frog).